A 564-amino-acid chain; its full sequence is Malignant brain tumor repeat protein 1 (564 aa).

MBT repeat units follow at residues 64–176 (FTWS…MKWL), 205–327 (RPTE…TKAT), 331–442 (LEHS…LDRL), and 450–549 (FKWE…LRHP).

As to quaternary structure, interacts with histone H3 that is trimethylated at 'Lys-9' (H3K9me3).

In Caenorhabditis elegans, this protein is Malignant brain tumor repeat protein 1 (mbtr-1).